The following is a 1183-amino-acid chain: MTSSGKIRIYELSKDLSLDNKDVLDAARKLAIAAKSHSSSISSLEANQIKDFLKKSNTINTTIKSSKNLDKQILSVKKNPVKTQKDQKTEPKKKNHDQTELSQAKLNTLLKPSQTLIKSQGSSQANNQKALKNKFPAKQQITSPSKPNKPLPPNPRVEVKPIISKPLTQAERAIPQSEQKKDGQFINQPKRSELAKKSIGQPKQINPQEPKRPLAPPSRPKIDIQDKKPLQPNNQKAKTRINQGEISPQKVGQGNIQKIKSQNKQNAPSRTPQPPTKGNTLELVGAPIRKEKPVNKPHTNEVRNKPVMPSRPGAPKPPTAANRQGLSNRPGSNNRIGGTGRPGSPNRQGPNRGGVANRTTQGQNRPGANNRAGAPVRSGSPNRGGMQNRPGVPTRSLGGPNRSNNRPGVPSGMRKPVAPSELMQLQKPQARPNAPQRKTDSPTSLRPKRENSTGARPPVNRPTPAAPKKPAHRPGGTAAAPRRTGRPDWDDSAKLDALRNKSPQKQRQKVHIIGENDDALTAERGGFAGEQQAVVLSASLARPSKPKVGKRNNGKPLTALKKRKKETTRQRQRRRAMELRASREAKLVRPEMIVVPEDNLTVQELADMLSVESSEIIKSLFFKGITATVTQSLDLATIETVAEEFGVPVLQDDVEEAAKKTVEMIEEGDLKYLIRRPPVVTVMGHVDHGKTSLLDAIRKARVAAGEAGGITQHIGAYQIETEHDGSTKKLTFLDTPGHEAFTAMRARGTRVTDVAILVVAADDGVRPQTLEAISHARAAKVPIVVAINKIDKEGSSPDRVKQELSEQDLLSEEWGGDVVMVPVSAIKGENIDKLLEMVLLVTEVEDLQANPDRLAKGTVIEAHLDKAKGPVATLLVQNGTLKSGDVVAAGPVLGKVRAMVDENGSRIKEAGPSCPVEALGFSEVPTAGDEFEVYPDEKAARAVVGERATDARAARLAQQMASRRVSLSSMSGQASEGELKELNIILKADVQGSLEAILGSLEQLPKDEVQVRVLLSAPGEITETDIDLAAASGAVIVGFNTSMASGAKRAADANGVDVREYEVIYKLLEDIQLAMEGLLEPEMIEEALGVAEVRAIFSIGKSAVAGCYVTNGKIQRNCRARVKRGKQIVFEGDLDSLKRNKDDVKDVSTGFECGIGCDRFANWEEGDQIEAFKLVTQRRKLNN.

Disordered stretches follow at residues 65 to 512 (SSKN…KVHI) and 540 to 579 (LARP…AMEL). Over residues 83–99 (TQKDQKTEPKKKNHDQT) the composition is skewed to basic and acidic residues. Over residues 100 to 130 (ELSQAKLNTLLKPSQTLIKSQGSSQANNQKA) the composition is skewed to polar residues. Over residues 220-229 (PKIDIQDKKP) the composition is skewed to basic and acidic residues. Residues 231-270 (QPNNQKAKTRINQGEISPQKVGQGNIQKIKSQNKQNAPSR) show a composition bias toward polar residues. Residues 288 to 304 (IRKEKPVNKPHTNEVRN) show a composition bias toward basic and acidic residues. Polar residues-rich tracts occupy residues 321-336 (ANRQ…NNRI) and 357-367 (NRTTQGQNRPG). The segment covering 485–499 (GRPDWDDSAKLDALR) has biased composition (basic and acidic residues). 2 stretches are compositionally biased toward basic residues: residues 544-553 (SKPKVGKRNN) and 560-574 (LKKR…RQRR). Residues 675-847 (RRPPVVTVMG…VLLVTEVEDL (173 aa)) enclose the tr-type G domain. The segment at 684–691 (GHVDHGKT) is G1. 684–691 (GHVDHGKT) is a binding site for GTP. The interval 709-713 (GITQH) is G2. Positions 734 to 737 (DTPG) are G3. Residues 734–738 (DTPGH) and 788–791 (NKID) each bind GTP. The interval 788 to 791 (NKID) is G4. The interval 824–826 (SAI) is G5.

Belongs to the TRAFAC class translation factor GTPase superfamily. Classic translation factor GTPase family. IF-2 subfamily.

The protein resides in the cytoplasm. In terms of biological role, one of the essential components for the initiation of protein synthesis. Protects formylmethionyl-tRNA from spontaneous hydrolysis and promotes its binding to the 30S ribosomal subunits. Also involved in the hydrolysis of GTP during the formation of the 70S ribosomal complex. The sequence is that of Translation initiation factor IF-2 from Prochlorococcus marinus (strain NATL2A).